We begin with the raw amino-acid sequence, 812 residues long: Phosphoenolpyruvate synthase (812 aa).

His430 (tele-phosphohistidine intermediate) is an active-site residue. Residues Arg520, Arg588, Glu690, Gly711, Ser712, Asn713, and Asp714 each coordinate substrate. Glu690 serves as a coordination point for Mg(2+). A Mg(2+)-binding site is contributed by Asp714. The active-site Proton donor is Cys761.

This sequence belongs to the PEP-utilizing enzyme family. It depends on Mg(2+) as a cofactor.

It carries out the reaction pyruvate + ATP + H2O = phosphoenolpyruvate + AMP + phosphate + 2 H(+). The protein operates within carbohydrate biosynthesis; gluconeogenesis. Functionally, catalyzes the phosphorylation of pyruvate to phosphoenolpyruvate. This Helicobacter pylori (strain ATCC 700392 / 26695) (Campylobacter pylori) protein is Phosphoenolpyruvate synthase (ppsA).